The primary structure comprises 211 residues: uncharacterized protein (211 aa).

This is an uncharacterized protein from Lactuca sativa (Garden lettuce).